Here is a 60-residue protein sequence, read N- to C-terminus: uncharacterized protein (60 aa).

This is an uncharacterized protein from Emericella nidulans (strain FGSC A4 / ATCC 38163 / CBS 112.46 / NRRL 194 / M139) (Aspergillus nidulans).